Consider the following 400-residue polypeptide: Phosphoglycerate kinase (400 aa).

Residues 21–23 (DFN), R36, 59–62 (HLGR), R119, and R160 contribute to the substrate site. ATP is bound by residues K211, E329, and 356–359 (GGDS).

Belongs to the phosphoglycerate kinase family. In terms of assembly, monomer.

It localises to the cytoplasm. The catalysed reaction is (2R)-3-phosphoglycerate + ATP = (2R)-3-phospho-glyceroyl phosphate + ADP. It participates in carbohydrate degradation; glycolysis; pyruvate from D-glyceraldehyde 3-phosphate: step 2/5. This is Phosphoglycerate kinase from Levilactobacillus brevis (strain ATCC 367 / BCRC 12310 / CIP 105137 / JCM 1170 / LMG 11437 / NCIMB 947 / NCTC 947) (Lactobacillus brevis).